Reading from the N-terminus, the 278-residue chain is MPDQALQQMLDRSCWVCFATDEDDRTAEWVRPCRCRGSTKWVHQACLQRWVDEKQRGNSTARVACPQCNAEYLIVFPKLGPVVYVLDLADRLISKACPFAAAGIMVGSIYWTAVTYGAVTVMQVVGHKEGLDVMERADPLFLLIGLPTIPVMLILGKMIRWEDYVLRLWRKYSNKLQILNSIFPGIGCPVPRIPAEANPLADHVSATRILCGALVFPTIATIVGKLMFSSVNSNLQRTILGGIAFVAIKGAFKVYFKQQQYLRQAHRKILNYPEQEEA.

An RING-CH-type zinc finger spans residues 6–75 (LQQMLDRSCW…PQCNAEYLIV (70 aa)). Zn(2+) contacts are provided by C14, C17, C33, C35, H43, C46, C65, and C68. Transmembrane regions (helical) follow at residues 99–119 (FAAAGIMVGSIYWTAVTYGAV), 139–159 (PLFLLIGLPTIPVMLILGKMI), 209–229 (ILCGALVFPTIATIVGKLMFS), and 238–258 (TILGGIAFVAIKGAFKVYFKQ).

In terms of assembly, monomer and homodimer. Interacts with MFN1, MFN2, DNM1L and FIS1. Autoubiquitinated leading to degradation (short half-life).

The protein localises to the mitochondrion outer membrane. It carries out the reaction S-ubiquitinyl-[E2 ubiquitin-conjugating enzyme]-L-cysteine + [acceptor protein]-L-lysine = [E2 ubiquitin-conjugating enzyme]-L-cysteine + N(6)-ubiquitinyl-[acceptor protein]-L-lysine.. It functions in the pathway protein modification; protein ubiquitination. Functionally, mitochondrial E3 ubiquitin-protein ligase that plays a crucial role in the control of mitochondrial morphology by acting as a positive regulator of mitochondrial fission and as an important regulator of immune response. Plays a crucial role in maintaining mitochondrial homeostasis by regulating the dynamics of mitochondria through the ubiquitination of key proteins involved in fission and fusion such as FIS1, DNM1L and MFN1. Acts as a critical determinant of mitotic apoptosis through both MCL1-dependent and -independent pathways. Turns off persistent immune signaling by degrading oligomeric complexes of retinoic acid-inducible gene I/DDX58 and mitochondrial antiviral-signaling protein/MAVS formed upon RNA virus infection. Promotes STING-mediated type-I interferon production via 'Lys-63'-linked ubiquitination of STING1 thereby preserving its activity and preventing the formation of inactive STING1 polymers. Plays also an essential role in the formation of PEX3-containing vesicles in the de novo biogenesis of peroxisomes from mitochondria. Acts as a regulator of NLRP3 inflammasome activation on the mitochondria by mediating the 'Lys-27'-linked polyubiquitination of NLRP3, positively regulating the NLRP3-NEK7 complex formation and NLRP3 oligomerization. In Bos taurus (Bovine), this protein is E3 ubiquitin-protein ligase MARCHF5 (MARCHF5).